We begin with the raw amino-acid sequence, 441 residues long: RUN domain-containing protein 3A (441 aa).

The tract at residues 1-293 is interaction with RAP2A; that stretch reads MEASFVQTTM…LQLQLEEAAA (293 aa). The 133-residue stretch at 52–184 folds into the RUN domain; that stretch reads DDSSEEFVNF…IDFSFCLKGE (133 aa). At Thr210 the chain carries Phosphothreonine. The tract at residues 211–234 is disordered; sequence DEEERHSAESSTSEDNSPEHPYLP. Position 227 is a phosphoserine (Ser227). The stretch at 262–317 forms a coiled coil; the sequence is YLEELVRLRESQLKDLEAENRRLQLQLEEAAAQNQREKRELEGVILELQEQLTGLI. Polar residues predominate over residues 367–379; sequence PLSAEASLSSDSQ. Positions 367 to 399 are disordered; it reads PLSAEASLSSDSQRLGEGKRDEEPWGPIGKDPT. Residues 380-389 are compositionally biased toward basic and acidic residues; the sequence is RLGEGKRDEE. A phosphoserine mark is found at Ser411 and Ser414.

The protein belongs to the RUNDC3 family. Interacts with the GTP-bound form of RAP2A.

Functionally, may act as an effector of RAP2A in neuronal cells. The sequence is that of RUN domain-containing protein 3A (RUNDC3A) from Bos taurus (Bovine).